The chain runs to 189 residues: Marginal zone B- and B1-cell-specific protein (189 aa).

A signal peptide spans 1–16; the sequence is MRLSLLLLLPLLGAWA. Cystine bridges form between Cys50/Cys178, Cys53/Cys171, and Cys95/Cys143. Residues 186–189 carry the Prevents secretion from ER motif; that stretch reads RTEL.

This sequence belongs to the MZB1 family. As to quaternary structure, part of the ER chaperone complex, a multi-protein complex in the endoplasmic reticulum containing a large number of molecular chaperones which associates with unassembled incompletely folded immunoglobulin heavy chains. Interacts with HSP90B1 and PDIA3 in a calcium-dependent manner. Forms an interchain disulfide bond with IgM monomers.

It localises to the endoplasmic reticulum lumen. It is found in the secreted. Functionally, associates with immunoglobulin M (IgM) heavy and light chains and promotes IgM assembly and secretion. May exert its effect by acting as a molecular chaperone or as an oxidoreductase as it displays a low level of oxidoreductase activity. Helps to diversify peripheral B-cell functions by regulating Ca(2+) stores, antibody secretion, and integrin activation. Its function is as follows. Acts as a hormone-regulated adipokine/pro-inflammatory cytokine that is implicated in causing chronic inflammation, affecting cellular expansion and blunting insulin response in adipocytes. May have a role in the onset of insulin resistance. The protein is Marginal zone B- and B1-cell-specific protein (MZB1) of Bos taurus (Bovine).